Here is a 312-residue protein sequence, read N- to C-terminus: Cytochrome c biogenesis protein CcsA (312 aa).

Helical transmembrane passes span 9 to 29, 44 to 64, 71 to 91, 111 to 131, 143 to 163, 216 to 236, 251 to 271, and 277 to 297; these read ILTHISFSIVSIVITIHLITF, GIIVTFFCITGLLVTRWISSG, LYESLIFLSWSFSLIHIIPYF, GFATSGILTEIHQSGILVPAL, MILGYAALLCGSLLSVALLVI, VISLGFTFLTIGILSGAVWAN, WAFITWIVFAIYLHTRTNINL, and AIIATIGFLIIWICYFGVNLL.

It belongs to the CcmF/CycK/Ccl1/NrfE/CcsA family. As to quaternary structure, may interact with Ccs1.

It is found in the plastid. It localises to the chloroplast thylakoid membrane. Required during biogenesis of c-type cytochromes (cytochrome c6 and cytochrome f) at the step of heme attachment. The chain is Cytochrome c biogenesis protein CcsA from Atropa belladonna (Belladonna).